Consider the following 397-residue polypeptide: Chorismate synthase (397 aa).

Residues Arg-40 and Arg-46 each coordinate NADP(+). Residues 129 to 131 (RAS), 257 to 258 (QA), Gly-302, 317 to 321 (KPIAT), and Arg-343 contribute to the FMN site.

It belongs to the chorismate synthase family. Homotetramer. FMNH2 is required as a cofactor.

It carries out the reaction 5-O-(1-carboxyvinyl)-3-phosphoshikimate = chorismate + phosphate. The protein operates within metabolic intermediate biosynthesis; chorismate biosynthesis; chorismate from D-erythrose 4-phosphate and phosphoenolpyruvate: step 7/7. Its function is as follows. Catalyzes the anti-1,4-elimination of the C-3 phosphate and the C-6 proR hydrogen from 5-enolpyruvylshikimate-3-phosphate (EPSP) to yield chorismate, which is the branch point compound that serves as the starting substrate for the three terminal pathways of aromatic amino acid biosynthesis. This reaction introduces a second double bond into the aromatic ring system. The chain is Chorismate synthase from Chlorobium phaeobacteroides (strain BS1).